Here is a 478-residue protein sequence, read N- to C-terminus: Methylenetetrahydrofolate--tRNA-(uracil-5-)-methyltransferase TrmFO (478 aa).

An FAD-binding site is contributed by 16-21 (GAGLAG). The disordered stretch occupies residues 429–448 (PLANPPTKGPDGKRLRGPEK). Over residues 438–448 (PDGKRLRGPEK) the composition is skewed to basic and acidic residues.

The protein belongs to the MnmG family. TrmFO subfamily. FAD is required as a cofactor.

The protein localises to the cytoplasm. It carries out the reaction uridine(54) in tRNA + (6R)-5,10-methylene-5,6,7,8-tetrahydrofolate + NADH + H(+) = 5-methyluridine(54) in tRNA + (6S)-5,6,7,8-tetrahydrofolate + NAD(+). The enzyme catalyses uridine(54) in tRNA + (6R)-5,10-methylene-5,6,7,8-tetrahydrofolate + NADPH + H(+) = 5-methyluridine(54) in tRNA + (6S)-5,6,7,8-tetrahydrofolate + NADP(+). Its function is as follows. Catalyzes the folate-dependent formation of 5-methyl-uridine at position 54 (M-5-U54) in all tRNAs. This chain is Methylenetetrahydrofolate--tRNA-(uracil-5-)-methyltransferase TrmFO, found in Rhodopseudomonas palustris (strain ATCC BAA-98 / CGA009).